The chain runs to 98 residues: Large ribosomal subunit protein uL23 (98 aa).

Belongs to the universal ribosomal protein uL23 family. Part of the 50S ribosomal subunit. Contacts protein L29, and trigger factor when it is bound to the ribosome.

One of the early assembly proteins it binds 23S rRNA. One of the proteins that surrounds the polypeptide exit tunnel on the outside of the ribosome. Forms the main docking site for trigger factor binding to the ribosome. The chain is Large ribosomal subunit protein uL23 from Borreliella afzelii (strain PKo) (Borrelia afzelii).